A 927-amino-acid chain; its full sequence is Calmodulin-binding transcription activator CBT (927 aa).

The segment at residues 26 to 152 is a DNA-binding region (CG-1); sequence YEKLVAEAAA…YRQTAEENAM (127 aa). The segment at 70–96 is necessary and sufficient for nuclear localization; sequence LYDRKVVRNFRKDGHNWKKKKDGRTVQ. A Nuclear localization signal motif is present at residues 72 to 79; sequence DRKVVRNF. An ANK repeat occupies 609–638; sequence SGWTALHWAAYHGRERMVATLLSAGANPSL. 2 IQ domains span residues 757–786 and 799–828; these read EIVA…IQSH and MRRQ…SVGI. A calmodulin-binding region spans residues 826–845; it reads VGIVEKAILRWRKKRKGLRG. Residues 830–851 form a necessary and sufficient for nuclear localization region; it reads EKAILRWRKKRKGLRGIASGMP. Residues 882–911 form the IQ 3 domain; sequence FNRSVVRVQALFRSYKAQQEYRRMKIAHEE.

This sequence belongs to the CAMTA family.

The protein localises to the nucleus. Transcriptional activation activity is strongly reduced by calmodulin. Transcription activator that binds calmodulin in a calcium-dependent manner in vitro. Binds to the DNA consensus sequence 5'-T[AC]CG[CT]GT[GT][GT][GT][GT]T[GT]CG-3'. The polypeptide is Calmodulin-binding transcription activator CBT (Oryza sativa subsp. japonica (Rice)).